The chain runs to 490 residues: Aspartyl/glutamyl-tRNA(Asn/Gln) amidotransferase subunit B (490 aa).

The protein belongs to the GatB/GatE family. GatB subfamily. Heterotrimer of A, B and C subunits.

It catalyses the reaction L-glutamyl-tRNA(Gln) + L-glutamine + ATP + H2O = L-glutaminyl-tRNA(Gln) + L-glutamate + ADP + phosphate + H(+). The catalysed reaction is L-aspartyl-tRNA(Asn) + L-glutamine + ATP + H2O = L-asparaginyl-tRNA(Asn) + L-glutamate + ADP + phosphate + 2 H(+). Allows the formation of correctly charged Asn-tRNA(Asn) or Gln-tRNA(Gln) through the transamidation of misacylated Asp-tRNA(Asn) or Glu-tRNA(Gln) in organisms which lack either or both of asparaginyl-tRNA or glutaminyl-tRNA synthetases. The reaction takes place in the presence of glutamine and ATP through an activated phospho-Asp-tRNA(Asn) or phospho-Glu-tRNA(Gln). This chain is Aspartyl/glutamyl-tRNA(Asn/Gln) amidotransferase subunit B, found in Prochlorococcus marinus (strain MIT 9515).